The chain runs to 404 residues: Voltage-gated potassium channel subunit beta-3 (404 aa).

A compositionally biased stretch (polar residues) spans 1–14; the sequence is MQVSIACTEQNLRS. The disordered stretch occupies residues 1–78; that stretch reads MQVSIACTEQ…RESTGRGTGM (78 aa). Gly residues predominate over residues 28 to 50; it reads PGGGNGGPVGGGHGNPPGGGGLG. NADP(+) is bound by residues Thr-97, Trp-98, Gln-104, and Asp-126. The active-site Proton donor/acceptor is Tyr-131. Asn-199, Ser-229, Arg-230, Gln-255, Trp-284, Ser-285, Pro-286, Leu-287, Ala-288, Cys-289, Lys-295, Lys-305, Gly-364, Ser-366, Gln-370, and Glu-373 together coordinate NADP(+).

It belongs to the shaker potassium channel beta subunit family. As to quaternary structure, forms heteromultimeric complex with alpha subunits. Interacts with KCNA5 and KCNB2. As to expression, predominantly expressed in brain. Strongest expression in olfactory bulb and thalamic nuclei. Not detected in heart, spleen, lung, liver, skeletal muscle, kidney and testis.

It localises to the cytoplasm. Functionally, regulatory subunit of the voltage-gated potassium (Kv) channels composed of pore-forming and potassium-conducting alpha subunits and of regulatory beta subunits. The beta-3/KCNAB3 subunit may mediate closure of potassium channels. Inactivates Kv1.4/KCNA4 alpha subunit-containing Kv channel current but not Kv1.1/KCNA1 or Kv1.5/KCNA5 channels. May display nicotinamide adenine dinucleotide phosphate (NADPH)-dependent aldoketoreductase activity. The binding of oxidized and reduced NADP(H) cofactors may be required for the regulation of potassium channel activity. This is Voltage-gated potassium channel subunit beta-3 from Rattus norvegicus (Rat).